A 1191-amino-acid polypeptide reads, in one-letter code: Laminin subunit gamma-2 (1191 aa).

Positions 1–21 (MPALWLSCCLGVALLLPAAQA) are cleaved as a signal peptide. 12 cysteine pairs are disulfide-bonded: Cys-28/Cys-37, Cys-30/Cys-53, Cys-56/Cys-65, Cys-68/Cys-81, Cys-84/Cys-96, Cys-86/Cys-102, Cys-104/Cys-113, Cys-116/Cys-128, Cys-139/Cys-150, Cys-141/Cys-155, Cys-157/Cys-166, and Cys-169/Cys-184. Laminin EGF-like domains follow at residues 28–83 (CDCN…RCLP), 84–130 (CNCH…GCTR), and 139–186 (CDCD…GCTQ). One can recognise a Laminin EGF-like 4; first part domain in the interval 187–196 (CFCYGHSASC). The region spanning 213-381 (QDVDGWKAVQ…SGAPAPWVER (169 aa)) is the Laminin IV type A domain. 2 N-linked (GlcNAc...) asparagine glycosylation sites follow: Asn-342 and Asn-362. The region spanning 382–415 (CVCPAGYKGQFCQECASGYKRDSARLGPFGACVP) is the Laminin EGF-like 4; second part domain. 3 Laminin EGF-like domains span residues 416–461 (CNCQ…SCKP), 462–516 (CPCH…PCQR), and 517–572 (CQCN…KCRA). Disulfide bonds link Cys-462/Cys-470, Cys-464/Cys-481, Cys-484/Cys-493, Cys-496/Cys-514, Cys-517/Cys-531, Cys-519/Cys-538, Cys-541/Cys-550, Cys-553/Cys-570, Cys-573/Cys-585, Cys-575/Cys-591, and Cys-593/Cys-602. Residue Asn-526 is glycosylated (N-linked (GlcNAc...) asparagine). The Laminin EGF-like 8; truncated domain occupies 573-602 (CNCSPMGSEPGECRGDGSCVCKPGFGGLNC). The short motif at 586–588 (RGD) is the Cell attachment site element. The tract at residues 603–1191 (DHAALTSCPA…CYNTQALEQQ (589 aa)) is domain II and I. 2 coiled-coil regions span residues 612–710 (ACYN…IRAL) and 759–786 (LAQE…ETED). Ser-805 carries an O-linked (Xyl...) (chondroitin sulfate) serine glycan. Asn-941 carries an N-linked (GlcNAc...) asparagine glycan. Residues 946–996 (EVENILKNLREFDLQVEDRKAEAEEAMKRLSSISQKVADASDKTQQAETAL) are a coiled coil. Residue Asn-1032 is glycosylated (N-linked (GlcNAc...) asparagine). Residues 1139-1178 (LMSDLEERVRRQRNHLHLLETSIDGILADVKNLENIRDNL) adopt a coiled-coil conformation.

Laminin is a complex glycoprotein, consisting of three different polypeptide chains (alpha, beta, gamma), which are bound to each other by disulfide bonds into a cross-shaped molecule comprising one long and three short arms with globules at each end. Gamma-2 is a subunit of laminin-5 (laminin-332 or epiligrin/kalinin/nicein). Binds to fibulin-1, fibulin-1c, fibulin-2 and nidogen. O-glycosylated; contains chondroitin sulfate (CS). As to expression, epithelial cells of many tissues, particularly high levels in tongue, hair follicles and kidney. Basement membranes of the collecting tubules of kidney and pancreas.

The protein resides in the secreted. Its subcellular location is the extracellular space. It is found in the extracellular matrix. The protein localises to the basement membrane. Binding to cells via a high affinity receptor, laminin is thought to mediate the attachment, migration and organization of cells into tissues during embryonic development by interacting with other extracellular matrix components. This is Laminin subunit gamma-2 (Lamc2) from Mus musculus (Mouse).